The sequence spans 261 residues: MKVLSSLAAALIALSAVDVEAEHVQRSLILGGGKVPVGSKTYTVGLRTTPEGDTFCGGALISPTHVLTTASCTAYEEGSSIPHWVAVGTHYLNGKKDGEQLKIVSAQNHTLYDASSFSYNLAVLTLEKPSKFAPIKLPKADGSDIFPRVWSKVMGWGVTSYPNGKPSNELQSVDVRVWGDNACENKLGVDKSSLCAGGEAGKDSCVGDTGDPLIKENGRGDADDILLGLSGWGTGCGDKDMPSVYSRVSAGIEWINSVIKK.

The first 21 residues, 1–21 (MKVLSSLAAALIALSAVDVEA), serve as a signal peptide directing secretion. One can recognise a Peptidase S1 domain in the interval 29 to 260 (ILGGGKVPVG…GIEWINSVIK (232 aa)). A disulfide bridge connects residues C56 and C72. N108 carries an N-linked (GlcNAc...) asparagine glycan. 2 disulfide bridges follow: C183–C195 and C205–C236.

This sequence belongs to the peptidase S1 family.

The protein resides in the secreted. Its function is as follows. Secreted effector that suppresses host plant glucan elicitor-mediated defense responses. Targets host endoglucanases and inhibits the endoglucanase-mediated release of elicitor-active glucan oligosaccharides from P.sojae cell walls. The sequence is that of Glucanase inhibitor protein 3 (GIP3) from Phytophthora sojae (strain P6497) (Soybean stem and root rot agent).